Reading from the N-terminus, the 146-residue chain is Large ribosomal subunit protein uL15 (146 aa).

A compositionally biased stretch (basic and acidic residues) spans methionine 1–arginine 18. Residues methionine 1 to phenylalanine 50 are disordered. Positions arginine 21 to serine 31 are enriched in gly residues.

It belongs to the universal ribosomal protein uL15 family. In terms of assembly, part of the 50S ribosomal subunit.

Functionally, binds to the 23S rRNA. The protein is Large ribosomal subunit protein uL15 of Listeria innocua serovar 6a (strain ATCC BAA-680 / CLIP 11262).